A 117-amino-acid polypeptide reads, in one-letter code: Large ribosomal subunit protein bL19 (117 aa).

Belongs to the bacterial ribosomal protein bL19 family.

Functionally, this protein is located at the 30S-50S ribosomal subunit interface and may play a role in the structure and function of the aminoacyl-tRNA binding site. This is Large ribosomal subunit protein bL19 from Bacteroides fragilis (strain ATCC 25285 / DSM 2151 / CCUG 4856 / JCM 11019 / LMG 10263 / NCTC 9343 / Onslow / VPI 2553 / EN-2).